A 566-amino-acid chain; its full sequence is 3'-5' exoribonuclease parn-1 (566 aa).

A divalent metal cation contacts are provided by Asp-29, Glu-31, Asp-283, and Asp-379.

It belongs to the CAF1 family. It depends on a divalent metal cation as a cofactor. As to expression, expressed in germline cells.

Its subcellular location is the cytoplasm. In terms of biological role, involved in transcriptome surveillance. Required for piwi-interacting RNAs (piRNAs) 3'-end trimming, which is important for both fertility and piRNA-directed gene silencing. Has 3' to 5' exonuclease activity in vitro. The sequence is that of 3'-5' exoribonuclease parn-1 from Caenorhabditis elegans.